A 207-amino-acid polypeptide reads, in one-letter code: Large ribosomal subunit protein uL4 (207 aa).

It belongs to the universal ribosomal protein uL4 family. In terms of assembly, part of the 50S ribosomal subunit.

Its function is as follows. One of the primary rRNA binding proteins, this protein initially binds near the 5'-end of the 23S rRNA. It is important during the early stages of 50S assembly. It makes multiple contacts with different domains of the 23S rRNA in the assembled 50S subunit and ribosome. Functionally, forms part of the polypeptide exit tunnel. The protein is Large ribosomal subunit protein uL4 of Rickettsia peacockii (strain Rustic).